We begin with the raw amino-acid sequence, 643 residues long: Hypoxia up-regulated protein 1 (643 aa).

The signal sequence occupies residues 1–22 (MRPLVCVFTMFLLALLSSNTES). The tract at residues 565-643 (LGNTISSLFG…EEEKSEPQEE (79 aa)) is disordered. A compositionally biased stretch (acidic residues) spans 590 to 610 (VQEEDEVPTEPTKEEEQESAD). Basic and acidic residues-rich tracts occupy residues 611–621 (AADKQKDKEKG) and 630–643 (EGKK…PQEE).

Belongs to the heat shock protein 70 family.

The protein resides in the endoplasmic reticulum lumen. In terms of biological role, has a pivotal role in cytoprotective cellular mechanisms triggered by oxygen deprivation. May play a role as a molecular chaperone and participate in protein folding. This is Hypoxia up-regulated protein 1 (hyou1) from Xenopus tropicalis (Western clawed frog).